Reading from the N-terminus, the 201-residue chain is NAD(P)H dehydrogenase (quinone) (201 aa).

One can recognise a Flavodoxin-like domain in the interval 7 to 192; the sequence is ILVLYYSMYG…SIARYQGEYV (186 aa). FMN contacts are provided by residues 13 to 18 and 81 to 83; these read SMYGHI and TRF. Residue Y15 coordinates NAD(+). W101 lines the substrate pocket. Residues 116 to 121 and H136 each bind FMN; that span reads STGTGG.

Belongs to the WrbA family. FMN is required as a cofactor.

The enzyme catalyses a quinone + NADH + H(+) = a quinol + NAD(+). The catalysed reaction is a quinone + NADPH + H(+) = a quinol + NADP(+). This chain is NAD(P)H dehydrogenase (quinone), found in Shigella sonnei (strain Ss046).